Consider the following 395-residue polypeptide: F-box only protein 7 (395 aa).

Residues 19–70 (NHDWSKLCPDILRKIIESLSSLDFYRAKIVCSDWYSVWKTCVKRPLRPWRII) enclose the F-box domain.

The protein is F-box only protein 7 (FBX7) of Arabidopsis thaliana (Mouse-ear cress).